A 304-amino-acid polypeptide reads, in one-letter code: Ribosomal RNA small subunit methyltransferase H (304 aa).

Residues glycine 37–histidine 39, aspartate 57, phenylalanine 79, aspartate 100, and histidine 107 contribute to the S-adenosyl-L-methionine site.

Belongs to the methyltransferase superfamily. RsmH family.

The protein localises to the cytoplasm. The catalysed reaction is cytidine(1402) in 16S rRNA + S-adenosyl-L-methionine = N(4)-methylcytidine(1402) in 16S rRNA + S-adenosyl-L-homocysteine + H(+). In terms of biological role, specifically methylates the N4 position of cytidine in position 1402 (C1402) of 16S rRNA. The sequence is that of Ribosomal RNA small subunit methyltransferase H from Phocaeicola vulgatus (strain ATCC 8482 / DSM 1447 / JCM 5826 / CCUG 4940 / NBRC 14291 / NCTC 11154) (Bacteroides vulgatus).